A 474-amino-acid polypeptide reads, in one-letter code: Aspartyl protease family protein At5g10770 (474 aa).

A signal peptide spans 1 to 25 (MSINRNLLNIIIILCICLNLGCNDG). The Peptidase A1 domain maps to 132–469 (YIVTVGLGTP…DGAGGRVGFA (338 aa)). Catalysis depends on residues Asp150 and Asp352. The cysteines at positions 391 and 432 are disulfide-linked. A lipid anchor (GPI-anchor amidated asparagine) is attached at Asn443. The propeptide at 444-474 (AAIFGNVQQQTLEVVYDGAGGRVGFAPNGCS) is removed in mature form.

Belongs to the peptidase A1 family.

It is found in the cell membrane. In terms of biological role, probably not redundant with AED1 and not involved in restriction of salicylic acid (SA) or systemic acquired resistance (SAR) signaling. The chain is Aspartyl protease family protein At5g10770 from Arabidopsis thaliana (Mouse-ear cress).